The sequence spans 146 residues: Large ribosomal subunit protein uL15 (146 aa).

Residues 1–13 show a composition bias toward basic and acidic residues; it reads MKLHELRPAEGSK. The interval 1–54 is disordered; that stretch reads MKLHELRPAEGSKKAPKRVGRGNGSGLGKTAGKGHKGQNARSGGGVRPGFEGGQ. Composition is skewed to gly residues over residues 21–31 and 42–52; these read RGNGSGLGKTA and SGGGVRPGFEG.

This sequence belongs to the universal ribosomal protein uL15 family. Part of the 50S ribosomal subunit.

Its function is as follows. Binds to the 23S rRNA. This Clostridium novyi (strain NT) protein is Large ribosomal subunit protein uL15.